We begin with the raw amino-acid sequence, 353 residues long: Thiamine-phosphate synthase (353 aa).

Residues 1-128 (MKSMPFAPIA…AASAAAIRYG (128 aa)) are unknown. The tract at residues 129–353 (LYDLEVTVLQ…TSLQLLEALR (225 aa)) is thiamine-phosphate synthase. 4-amino-2-methyl-5-(diphosphooxymethyl)pyrimidine is bound by residues 185–189 (QYRNK) and Asn217. Residues Asp218 and Asp237 each coordinate Mg(2+). Ser256 contributes to the 4-amino-2-methyl-5-(diphosphooxymethyl)pyrimidine binding site. 282–284 (TAT) is a binding site for 2-[(2R,5Z)-2-carboxy-4-methylthiazol-5(2H)-ylidene]ethyl phosphate. Lys285 lines the 4-amino-2-methyl-5-(diphosphooxymethyl)pyrimidine pocket. A 2-[(2R,5Z)-2-carboxy-4-methylthiazol-5(2H)-ylidene]ethyl phosphate-binding site is contributed by Gly312.

This sequence belongs to the thiamine-phosphate synthase family. Mg(2+) is required as a cofactor.

The catalysed reaction is 2-[(2R,5Z)-2-carboxy-4-methylthiazol-5(2H)-ylidene]ethyl phosphate + 4-amino-2-methyl-5-(diphosphooxymethyl)pyrimidine + 2 H(+) = thiamine phosphate + CO2 + diphosphate. It carries out the reaction 2-(2-carboxy-4-methylthiazol-5-yl)ethyl phosphate + 4-amino-2-methyl-5-(diphosphooxymethyl)pyrimidine + 2 H(+) = thiamine phosphate + CO2 + diphosphate. It catalyses the reaction 4-methyl-5-(2-phosphooxyethyl)-thiazole + 4-amino-2-methyl-5-(diphosphooxymethyl)pyrimidine + H(+) = thiamine phosphate + diphosphate. The protein operates within cofactor biosynthesis; thiamine diphosphate biosynthesis; thiamine phosphate from 4-amino-2-methyl-5-diphosphomethylpyrimidine and 4-methyl-5-(2-phosphoethyl)-thiazole: step 1/1. In terms of biological role, condenses 4-methyl-5-(beta-hydroxyethyl)thiazole monophosphate (THZ-P) and 2-methyl-4-amino-5-hydroxymethyl pyrimidine pyrophosphate (HMP-PP) to form thiamine monophosphate (TMP). This chain is Thiamine-phosphate synthase, found in Prochlorococcus marinus (strain MIT 9313).